The chain runs to 149 residues: Transcriptional repressor NrdR (149 aa).

Residues 3-34 fold into a zinc finger; the sequence is CPFCTAEETKVIDSRLAADGYQIRRRRECIGC. The region spanning 49–139 is the ATP-cone domain; it reads PYIIKNNGNR…VYLSFDDIEE (91 aa).

Belongs to the NrdR family. Requires Zn(2+) as cofactor.

Negatively regulates transcription of bacterial ribonucleotide reductase nrd genes and operons by binding to NrdR-boxes. The chain is Transcriptional repressor NrdR from Haemophilus ducreyi (strain 35000HP / ATCC 700724).